Consider the following 110-residue polypeptide: Carboxysome shell protein CsoS1B (110 aa).

In terms of domain architecture, BMC spans 8–93; that stretch reads ALGMIETRGL…VHSEVEIILP (86 aa).

This sequence belongs to the bacterial microcompartments protein family. CsoS1 subfamily. Homohexamer with a small central pore. Interacts with the N-terminus (residues 1-136) of RuBisCO (CbbL).

Its subcellular location is the carboxysome. Functionally, one of shell proteins of the carboxysome, a polyhedral inclusion where RuBisCO (ribulose bisphosphate carboxylase, ccbL-ccbS) is sequestered. Assembles into hexamers which make sheets that form the facets of the polyhedral carboxysome. The shell probably limits the diffusion of CO(2) into and out of the carboxysome. There are estimated to be 540 CsoS1B proteins per carboxysome. Its function is as follows. Unlike beta-carboxysomes, alpha-carboxysomes (Cb) can form without cargo protein. CsoS2 is essential for Cb formation and is also capable of targeting foreign proteins to the Cb. The Cb shell assembles with the aid of CsoS2; CsoS1A, CsoS1B and CsoS1C form the majority of the shell while CsoS4A and CsoS4B form vertices. CsoS1D forms pseudohexamers that probably control metabolite flux into and out of the shell. The polypeptide is Carboxysome shell protein CsoS1B (Halothiobacillus neapolitanus (strain ATCC 23641 / c2) (Thiobacillus neapolitanus)).